A 298-amino-acid chain; its full sequence is Ribosomal RNA small subunit methyltransferase H (298 aa).

Residues 31-33, Asp-50, Tyr-80, Asp-95, and Gln-102 contribute to the S-adenosyl-L-methionine site; that span reads GGH. The disordered stretch occupies residues 255–298; it reads AEKDLYGNTNKPFKSVGKAIDPDDEEKERNNRARSARLRIAERE.

Belongs to the methyltransferase superfamily. RsmH family.

The protein resides in the cytoplasm. The catalysed reaction is cytidine(1402) in 16S rRNA + S-adenosyl-L-methionine = N(4)-methylcytidine(1402) in 16S rRNA + S-adenosyl-L-homocysteine + H(+). Functionally, specifically methylates the N4 position of cytidine in position 1402 (C1402) of 16S rRNA. This is Ribosomal RNA small subunit methyltransferase H from Cytophaga hutchinsonii (strain ATCC 33406 / DSM 1761 / CIP 103989 / NBRC 15051 / NCIMB 9469 / D465).